Here is a 350-residue protein sequence, read N- to C-terminus: Lipase chaperone (350 aa).

The helical transmembrane segment at 12–32 (IVLYLILGCVVVCGVWYSFDV) threads the bilayer.

This sequence belongs to the lipase chaperone family.

The protein resides in the cell inner membrane. Functionally, may be involved in the folding of the extracellular lipase during its passage through the periplasm. In Xylella fastidiosa (strain 9a5c), this protein is Lipase chaperone (lifO).